The chain runs to 312 residues: HPr kinase/phosphorylase (312 aa).

Residues H139 and K160 contribute to the active site. An ATP-binding site is contributed by 154-161; the sequence is GSSGVGKS. A Mg(2+)-binding site is contributed by S161. D178 acts as the Proton acceptor; for phosphorylation activity. Proton donor; for dephosphorylation activity in catalysis. The segment at 202–211 is important for the catalytic mechanism of both phosphorylation and dephosphorylation; it reads LEIRGLGIIN. A Mg(2+)-binding site is contributed by E203. R244 is an active-site residue. The important for the catalytic mechanism of dephosphorylation stretch occupies residues 265-270; it reads PVRPGR.

Belongs to the HPrK/P family. Homohexamer. The cofactor is Mg(2+).

The enzyme catalyses [HPr protein]-L-serine + ATP = [HPr protein]-O-phospho-L-serine + ADP + H(+). It catalyses the reaction [HPr protein]-O-phospho-L-serine + phosphate + H(+) = [HPr protein]-L-serine + diphosphate. Catalyzes the ATP- as well as the pyrophosphate-dependent phosphorylation of a specific serine residue in HPr, a phosphocarrier protein of the phosphoenolpyruvate-dependent sugar phosphotransferase system (PTS). HprK/P also catalyzes the pyrophosphate-producing, inorganic phosphate-dependent dephosphorylation (phosphorolysis) of seryl-phosphorylated HPr (P-Ser-HPr). The two antagonistic activities of HprK/P are regulated by several intracellular metabolites, which change their concentration in response to the absence or presence of rapidly metabolisable carbon sources (glucose, fructose, etc.) in the growth medium. Therefore, by controlling the phosphorylation state of HPr, HPrK/P is a sensor enzyme that plays a major role in the regulation of carbon metabolism and sugar transport: it mediates carbon catabolite repression (CCR), and regulates PTS-catalyzed carbohydrate uptake and inducer exclusion. This is HPr kinase/phosphorylase from Listeria monocytogenes serotype 4b (strain CLIP80459).